The chain runs to 85 residues: Glutaredoxin (85 aa).

Positions 1–85 (MQTVTMYTGP…EGGLDGLLNP (85 aa)) constitute a Glutaredoxin domain. A disulfide bond links cysteine 12 and cysteine 15.

Belongs to the glutaredoxin family. As to quaternary structure, monomer.

It is found in the cytoplasm. Its function is as follows. Has a glutathione-disulfide oxidoreductase activity in the presence of NADPH and glutathione reductase. Reduces low molecular weight disulfides and proteins. The polypeptide is Glutaredoxin (grx) (Neisseria meningitidis serogroup B (strain ATCC BAA-335 / MC58)).